Reading from the N-terminus, the 747-residue chain is MAPSFDHLRDEDLDEDDFDVDEVDISDIREKYEVQLEQGYDAFVVVDGLPEVNEEQKPKLVKFLLKKLNTVGKTREDLIFMPMGEDGKSLRFAFVEYSSPAEAAAACRQLDLVPLDKKHTLRVNKLTDVDRYGREGRIDDEYTPPKIEEFQEKEHLRSFMADPSGRGRDQFVMFRGESVGVFWNNEKDTPENIVDRQHWTETFVQWSPLGTYLTSVHAQGVQLWGGPSWTRQRRFAHPFVNLVAFSPNEKYLVTWSNRPISIPEEGHPALSVEDDGKNYVIWDIETSKPLRSFAQLDTPAAAEGEAPKKAPKFPWPAFKWSADDKYVARLNPGQSISVYELPRMNLLDKTAIKIEGVVDFDWAPATVQRDGVKSYEQLFCFWTPEIGSNPARVGLMSIPSKQVVRSLNLFSVSDAKLHWQSEGAYLCVKVDRHSKSKKSQATTLEIFRVKEKGVPVEVVDTIKDTVINFAWEPKGDRFVIITTTEPVGATAVPPKTSVAFFCPEKAKGNAVGNFKHLRTLEKKNSNAIYWSPKGRFVVVATVANTQSSDLDFYDLDFEGEKPESDKDLTANLQLMNTADHYGVTDVEWDPSGRFVATWASAWKHSMENGYHLYDFKGEQLREEAIEKFKQFQWRPRPATLLSKEEQKAIRRNLREYSRIFEQEDAERISSADVAVVEARRRLLEEWFAWREAIRQEVAEEREIYGLPADPVADLIKAKTPELATDQEEQVIEEIMEEVLEETEEIVQ.

One can recognise an RRM domain in the interval 42 to 128 (AFVVVDGLPE…HTLRVNKLTD (87 aa)). WD repeat units follow at residues 195–234 (DRQH…RQRR), 236–292 (AHPF…PLRS), 310–349 (APKF…LLDK), 520–563 (LEKK…EKPE), and 578–623 (ADHY…LREE).

Belongs to the eIF-3 subunit B family. Component of the eukaryotic translation initiation factor 3 (eIF-3) complex.

It localises to the cytoplasm. Functionally, RNA-binding component of the eukaryotic translation initiation factor 3 (eIF-3) complex, which is involved in protein synthesis of a specialized repertoire of mRNAs and, together with other initiation factors, stimulates binding of mRNA and methionyl-tRNAi to the 40S ribosome. The eIF-3 complex specifically targets and initiates translation of a subset of mRNAs involved in cell proliferation. The chain is Eukaryotic translation initiation factor 3 subunit B (prt-1) from Neurospora crassa (strain ATCC 24698 / 74-OR23-1A / CBS 708.71 / DSM 1257 / FGSC 987).